Reading from the N-terminus, the 423-residue chain is Maltooligosaccharide ABC transporter solute-binding lipoprotein (423 aa).

A signal peptide spans 1 to 24 (MSSKFMKSAAVLGTATLASLLLVA). Cys25 carries N-palmitoyl cysteine lipidation. The S-diacylglycerol cysteine moiety is linked to residue Cys25. Residues Tyr52, Asp77, Asp83, 103–104 (DR), Glu148, Asp193, Asn196, 251–254 (EGAG), Trp274, and Lys307 each bind substrate.

Belongs to the bacterial solute-binding protein 1 family.

Its subcellular location is the cell membrane. In terms of biological role, part of an ABC transporter complex involved in the uptake of maltodextrins. Binds glycogen-derived linear maltooligosaccharides increasing in size from maltotriose to maltooctaose with the highest affinity for maltotriose. Has a very weak affinity for maltose. Has also a very low affinity for maltotetraitol, indicating that the binding is selective for maltooligosaccharides with an intact reducing end. The polypeptide is Maltooligosaccharide ABC transporter solute-binding lipoprotein (Streptococcus pneumoniae serotype 4 (strain ATCC BAA-334 / TIGR4)).